The primary structure comprises 92 residues: uncharacterized protein (92 aa).

In terms of domain architecture, HMA spans 24–89 (KQIVLKVKEM…AIHKLKYTAE (66 aa)). Residues C35 and C38 each coordinate a metal cation.

This is an uncharacterized protein from Haemophilus influenzae (strain ATCC 51907 / DSM 11121 / KW20 / Rd).